We begin with the raw amino-acid sequence, 184 residues long: Large ribosomal subunit protein uL15 (184 aa).

A disordered region spans residues 1–45; it reads MNLSSLRPAKGSVRNKKRVGRGQGSGNGTTAGKGNKGQQARSGYK. Positions 21–35 are enriched in gly residues; that stretch reads RGQGSGNGTTAGKGN.

It belongs to the universal ribosomal protein uL15 family. In terms of assembly, part of the 50S ribosomal subunit.

Its function is as follows. Binds to the 23S rRNA. In Chlorobium chlorochromatii (strain CaD3), this protein is Large ribosomal subunit protein uL15.